Reading from the N-terminus, the 407-residue chain is Probable tRNA sulfurtransferase (407 aa).

Residues glutamate 61–valine 165 form the THUMP domain. ATP contacts are provided by residues methionine 183–leucine 184, histidine 208–phenylalanine 209, arginine 265, glycine 287, and glutamine 296.

Belongs to the ThiI family.

It is found in the cytoplasm. The enzyme catalyses [ThiI sulfur-carrier protein]-S-sulfanyl-L-cysteine + a uridine in tRNA + 2 reduced [2Fe-2S]-[ferredoxin] + ATP + H(+) = [ThiI sulfur-carrier protein]-L-cysteine + a 4-thiouridine in tRNA + 2 oxidized [2Fe-2S]-[ferredoxin] + AMP + diphosphate. It carries out the reaction [ThiS sulfur-carrier protein]-C-terminal Gly-Gly-AMP + S-sulfanyl-L-cysteinyl-[cysteine desulfurase] + AH2 = [ThiS sulfur-carrier protein]-C-terminal-Gly-aminoethanethioate + L-cysteinyl-[cysteine desulfurase] + A + AMP + 2 H(+). It functions in the pathway cofactor biosynthesis; thiamine diphosphate biosynthesis. Catalyzes the ATP-dependent transfer of a sulfur to tRNA to produce 4-thiouridine in position 8 of tRNAs, which functions as a near-UV photosensor. Also catalyzes the transfer of sulfur to the sulfur carrier protein ThiS, forming ThiS-thiocarboxylate. This is a step in the synthesis of thiazole, in the thiamine biosynthesis pathway. The sulfur is donated as persulfide by IscS. This is Probable tRNA sulfurtransferase from Staphylococcus saprophyticus subsp. saprophyticus (strain ATCC 15305 / DSM 20229 / NCIMB 8711 / NCTC 7292 / S-41).